A 694-amino-acid polypeptide reads, in one-letter code: Nuclear cap-binding protein subunit 3 (694 aa).

Positions 1–47 (MAAVRSLRVSVKSDSASDRSESDSESDSDRDAREAEPMEVEEGEVEL) are disordered. A compositionally biased stretch (basic and acidic residues) spans 15–36 (SASDRSESDSESDSDRDAREAE). Acidic residues predominate over residues 37 to 47 (PMEVEEGEVEL). Residues 126-187 (EALHMSGVDD…LSRMPDKEEV (62 aa)) are RNA recognition motif (RRM) domain. Residues 155-158 (WIDD) carry the WLDD motif; essential for 7-methylguanosine-containing mRNA cap binding motif. Disordered regions lie at residues 183–277 (DKEE…VKPF), 336–430 (ILKT…MDYD), and 461–694 (LRNS…DSDS). Residues 189–203 (NTDSSKPSELPVQTQ) show a composition bias toward polar residues. Residues 212–235 (DDDDDDDEEEEGEVDDDDDDDEED) show a composition bias toward acidic residues. Residues 236 to 264 (EKARDIEDETEKKPQETRETSLSQAERDS) are compositionally biased toward basic and acidic residues. The segment covering 368–386 (EPIEEEEEEEEDGEEDMDA) has biased composition (acidic residues). Positions 387–404 (DDRVVEYKDRGEKERGPR) are enriched in basic and acidic residues. The span at 477–496 (IGGGGGGGSGGAVEGRGEGG) shows a compositional bias: gly residues. Composition is skewed to basic and acidic residues over residues 501-517 (TSEK…EKRQ), 563-595 (SRRE…DKKT), and 605-618 (SHKD…DKPS). A compositionally biased stretch (acidic residues) spans 634–646 (DSDGVEDEDEEDD). Positions 685 to 694 (DGSNGSDSDS) are enriched in low complexity.

The protein belongs to the NCBP3 family. As to quaternary structure, component of an alternative cap-binding complex (CBC) composed of NCBP1/CBP80 and NCBP3.

The protein localises to the nucleus. It is found in the cytoplasm. Associates with NCBP1/CBP80 to form an alternative cap-binding complex (CBC) which plays a key role in mRNA export. NCBP3 serves as adapter protein linking the capped RNAs (m7GpppG-capped RNA) to NCBP1/CBP80. Unlike the conventional CBC with NCBP2 which binds both small nuclear RNA (snRNA) and messenger (mRNA) and is involved in their export from the nucleus, the alternative CBC with NCBP3 does not bind snRNA and associates only with mRNA thereby playing a role in only mRNA export. This chain is Nuclear cap-binding protein subunit 3, found in Danio rerio (Zebrafish).